The following is a 136-amino-acid chain: Ribosome-binding factor A (136 aa).

Belongs to the RbfA family. Monomer. Binds 30S ribosomal subunits, but not 50S ribosomal subunits or 70S ribosomes.

Its subcellular location is the cytoplasm. Its function is as follows. One of several proteins that assist in the late maturation steps of the functional core of the 30S ribosomal subunit. Associates with free 30S ribosomal subunits (but not with 30S subunits that are part of 70S ribosomes or polysomes). Required for efficient processing of 16S rRNA. May interact with the 5'-terminal helix region of 16S rRNA. In Cellvibrio japonicus (strain Ueda107) (Pseudomonas fluorescens subsp. cellulosa), this protein is Ribosome-binding factor A.